Reading from the N-terminus, the 442-residue chain is Amino-acid acetyltransferase (442 aa).

The 148-residue stretch at Glu295–Ser442 folds into the N-acetyltransferase domain.

The protein belongs to the acetyltransferase family. ArgA subfamily.

The protein resides in the cytoplasm. The enzyme catalyses L-glutamate + acetyl-CoA = N-acetyl-L-glutamate + CoA + H(+). The protein operates within amino-acid biosynthesis; L-arginine biosynthesis; N(2)-acetyl-L-ornithine from L-glutamate: step 1/4. The protein is Amino-acid acetyltransferase of Aeromonas salmonicida (strain A449).